We begin with the raw amino-acid sequence, 232 residues long: Probable caffeoyl-CoA O-methyltransferase At4g26220 (232 aa).

A substrate-binding site is contributed by K7. Residues T49, E71, 73–74 (GV), S79, D97, and A126 contribute to the S-adenosyl-L-methionine site. D149 provides a ligand contact to substrate. D149 serves as a coordination point for a divalent metal cation. D151 serves as a coordination point for S-adenosyl-L-methionine. Residues D175 and N176 each coordinate a divalent metal cation.

It belongs to the class I-like SAM-binding methyltransferase superfamily. Cation-dependent O-methyltransferase family. CCoAMT subfamily. Requires a divalent metal cation as cofactor.

The catalysed reaction is (E)-caffeoyl-CoA + S-adenosyl-L-methionine = (E)-feruloyl-CoA + S-adenosyl-L-homocysteine + H(+). It participates in aromatic compound metabolism; phenylpropanoid biosynthesis. Its function is as follows. Methylates caffeoyl-CoA to feruloyl-CoA and 5-hydroxyferuloyl-CoA to sinapoyl-CoA. Plays a role in the synthesis of feruloylated polysaccharides. Involved in the reinforcement of the plant cell wall. Also involved in the responding to wounding or pathogen challenge by the increased formation of cell wall-bound ferulic acid polymers. The polypeptide is Probable caffeoyl-CoA O-methyltransferase At4g26220 (Arabidopsis thaliana (Mouse-ear cress)).